Reading from the N-terminus, the 354-residue chain is Uroporphyrinogen decarboxylase (354 aa).

Substrate contacts are provided by residues 28–32 (RQAGR), D78, Y155, S210, and H325.

Belongs to the uroporphyrinogen decarboxylase family. Homodimer.

The protein resides in the cytoplasm. The enzyme catalyses uroporphyrinogen III + 4 H(+) = coproporphyrinogen III + 4 CO2. The protein operates within porphyrin-containing compound metabolism; protoporphyrin-IX biosynthesis; coproporphyrinogen-III from 5-aminolevulinate: step 4/4. Functionally, catalyzes the decarboxylation of four acetate groups of uroporphyrinogen-III to yield coproporphyrinogen-III. The polypeptide is Uroporphyrinogen decarboxylase (Trichodesmium erythraeum (strain IMS101)).